Here is a 238-residue protein sequence, read N- to C-terminus: DNA repair protein RecO (238 aa).

The protein belongs to the RecO family.

Its function is as follows. Involved in DNA repair and RecF pathway recombination. The protein is DNA repair protein RecO of Aliivibrio salmonicida (strain LFI1238) (Vibrio salmonicida (strain LFI1238)).